Consider the following 404-residue polypeptide: tRNA pseudouridine(31) synthase (404 aa).

The active site involves Asp168.

This sequence belongs to the pseudouridine synthase RluA family.

The protein resides in the cytoplasm. Its subcellular location is the mitochondrion. The enzyme catalyses uridine(31) in tRNA = pseudouridine(31) in tRNA. Functionally, catalyzes the formation of pseudouridine at position 31 in the psi GC loop of tRNAS. The sequence is that of tRNA pseudouridine(31) synthase (PUS6) from Saccharomyces cerevisiae (strain ATCC 204508 / S288c) (Baker's yeast).